Reading from the N-terminus, the 310-residue chain is Probable cell division protein WhiA (310 aa).

The segment at residues 277-310 is a DNA-binding region (H-T-H motif); that stretch reads SLKELAEQVPDGPISKSGVNHRLKKLHEIAENLR.

It belongs to the WhiA family.

Its function is as follows. Involved in cell division and chromosome segregation. This chain is Probable cell division protein WhiA, found in Lactobacillus delbrueckii subsp. bulgaricus (strain ATCC 11842 / DSM 20081 / BCRC 10696 / JCM 1002 / NBRC 13953 / NCIMB 11778 / NCTC 12712 / WDCM 00102 / Lb 14).